Here is a 424-residue protein sequence, read N- to C-terminus: Tubby protein homolog 1 (424 aa).

The tract at residues 19-47 (MLEDKQKQKRHQSAGSVRTTTTTSSMSMN) is disordered. The segment covering 37–47 (TTTTTSSMSMN) has biased composition (low complexity).

The protein belongs to the TUB family. Interacts with rgb-3.

The protein resides in the cytoplasm. The protein localises to the cell projection. It localises to the axon. It is found in the dendrite. Its subcellular location is the cilium. In terms of biological role, has a role in fat regulation independent of daf-16. Implicated in ciliar sensory function which is required for normal sensory behavior such as chemotaxis. Functions in life span control via the insulin/IGF-1 pathway. Thought to be involved in neuronal trafficking. This Caenorhabditis briggsae protein is Tubby protein homolog 1.